The sequence spans 174 residues: MTYVLFTLSVMLVMGFVGFSSKPSPIYGGLALVVSGVVGCMIILNYGGAYLGLVMFLIYLGGMMVVFGYTAAMAIEEYPETWGSGFEVLACFLVGLMMEVGLVLWVLDFDEVVVMVGFNDMGNWVVFEGEGSGLVRSDSIGAGALYDYGRWLVVVAGWTLFVGVYVVIEITRGN.

Transmembrane regions (helical) follow at residues 1 to 21 (MTYV…GFSS), 24 to 44 (SPIY…MIIL), 47 to 67 (GGAY…MVVF), 86 to 106 (FEVL…VLWV), and 151 to 171 (WLVV…IEIT).

This sequence belongs to the complex I subunit 6 family. Core subunit of respiratory chain NADH dehydrogenase (Complex I) which is composed of 45 different subunits.

It localises to the mitochondrion inner membrane. The catalysed reaction is a ubiquinone + NADH + 5 H(+)(in) = a ubiquinol + NAD(+) + 4 H(+)(out). Functionally, core subunit of the mitochondrial membrane respiratory chain NADH dehydrogenase (Complex I) which catalyzes electron transfer from NADH through the respiratory chain, using ubiquinone as an electron acceptor. Essential for the catalytic activity and assembly of complex I. The protein is NADH-ubiquinone oxidoreductase chain 6 (MT-ND6) of Papio hamadryas (Hamadryas baboon).